The primary structure comprises 271 residues: Dermonecrotic toxin LhSicTox-alphaIA2aiv (271 aa).

His3 is an active-site residue. Glu23 and Asp25 together coordinate Mg(2+). Catalysis depends on His39, which acts as the Nucleophile. 2 disulfide bridges follow: Cys43/Cys49 and Cys45/Cys188. Asp83 contributes to the Mg(2+) binding site.

The protein belongs to the arthropod phospholipase D family. Class II subfamily. Mg(2+) is required as a cofactor. As to expression, expressed by the venom gland.

The protein resides in the secreted. The enzyme catalyses an N-(acyl)-sphingosylphosphocholine = an N-(acyl)-sphingosyl-1,3-cyclic phosphate + choline. It carries out the reaction an N-(acyl)-sphingosylphosphoethanolamine = an N-(acyl)-sphingosyl-1,3-cyclic phosphate + ethanolamine. It catalyses the reaction a 1-acyl-sn-glycero-3-phosphocholine = a 1-acyl-sn-glycero-2,3-cyclic phosphate + choline. The catalysed reaction is a 1-acyl-sn-glycero-3-phosphoethanolamine = a 1-acyl-sn-glycero-2,3-cyclic phosphate + ethanolamine. In terms of biological role, dermonecrotic toxins cleave the phosphodiester linkage between the phosphate and headgroup of certain phospholipids (sphingolipid and lysolipid substrates), forming an alcohol (often choline) and a cyclic phosphate. This toxin acts on sphingomyelin (SM). It may also act on ceramide phosphoethanolamine (CPE), lysophosphatidylcholine (LPC) and lysophosphatidylethanolamine (LPE), but not on lysophosphatidylserine (LPS), and lysophosphatidylglycerol (LPG). It acts by transphosphatidylation, releasing exclusively cyclic phosphate products as second products. Induces dermonecrosis, hemolysis, increased vascular permeability, edema, inflammatory response, and platelet aggregation. This Loxosceles hirsuta (Recluse spider) protein is Dermonecrotic toxin LhSicTox-alphaIA2aiv.